The following is a 96-amino-acid chain: Ribonuclease P protein component 1 (96 aa).

Belongs to the eukaryotic/archaeal RNase P protein component 1 family. In terms of assembly, consists of a catalytic RNA component and at least 4-5 protein subunits.

It is found in the cytoplasm. The enzyme catalyses Endonucleolytic cleavage of RNA, removing 5'-extranucleotides from tRNA precursor.. Functionally, part of ribonuclease P, a protein complex that generates mature tRNA molecules by cleaving their 5'-ends. This Methanococcus aeolicus (strain ATCC BAA-1280 / DSM 17508 / OCM 812 / Nankai-3) protein is Ribonuclease P protein component 1.